A 154-amino-acid chain; its full sequence is 6,7-dimethyl-8-ribityllumazine synthase (154 aa).

Residues Phe-22, 56–58, and 80–82 each bind 5-amino-6-(D-ribitylamino)uracil; these read AFE and AVI. 85–86 provides a ligand contact to (2S)-2-hydroxy-3-oxobutyl phosphate; the sequence is ET. His-88 (proton donor) is an active-site residue. Phe-113 serves as a coordination point for 5-amino-6-(D-ribitylamino)uracil. Arg-127 contributes to the (2S)-2-hydroxy-3-oxobutyl phosphate binding site.

The protein belongs to the DMRL synthase family.

The catalysed reaction is (2S)-2-hydroxy-3-oxobutyl phosphate + 5-amino-6-(D-ribitylamino)uracil = 6,7-dimethyl-8-(1-D-ribityl)lumazine + phosphate + 2 H2O + H(+). It functions in the pathway cofactor biosynthesis; riboflavin biosynthesis; riboflavin from 2-hydroxy-3-oxobutyl phosphate and 5-amino-6-(D-ribitylamino)uracil: step 1/2. Functionally, catalyzes the formation of 6,7-dimethyl-8-ribityllumazine by condensation of 5-amino-6-(D-ribitylamino)uracil with 3,4-dihydroxy-2-butanone 4-phosphate. This is the penultimate step in the biosynthesis of riboflavin. The protein is 6,7-dimethyl-8-ribityllumazine synthase of Thermoanaerobacter sp. (strain X514).